A 391-amino-acid chain; its full sequence is MKFNKLSEQNLSGKRALIRVDMNVPLKNGVIGDDTRIRASLPTIEHCLKAGAAVLLMTHLGRPTEGEPKPEDSLAPVVARLSELLGKPVRLIADFHAGVELAPGEVAMLENVRLNKGEKKNNDELGRAYAALCDVFVHDAFGTAHRAEASTHAVAKFAPVACAGLLLSAELDALGKALQAPARPLVAIVAGSKVSTKLTILEALADKVDQLIVGGGIANTFLLAEGKAIGKSLAEADLVEDARRVIAKIRARGGDVPLPADVVCAKEFAETAAAATKNVAEVVADDMILDIGPDAAKQLAAIIAQAGTVVWNGPVGVFEFDQFGNGTKTLAQAIAQSKAFSIAGGGDTLAAIAKYGITDDISYISTGGGAFLEFLEGKELPAVAILAERAQ.

Residues Asp-21–Asn-23, Arg-36, His-59–Arg-62, Arg-113, and Arg-146 each bind substrate. ATP is bound by residues Lys-197, Glu-319, and Gly-345–Thr-348.

The protein belongs to the phosphoglycerate kinase family. As to quaternary structure, monomer.

The protein localises to the cytoplasm. It carries out the reaction (2R)-3-phosphoglycerate + ATP = (2R)-3-phospho-glyceroyl phosphate + ADP. The protein operates within carbohydrate degradation; glycolysis; pyruvate from D-glyceraldehyde 3-phosphate: step 2/5. This Chromobacterium violaceum (strain ATCC 12472 / DSM 30191 / JCM 1249 / CCUG 213 / NBRC 12614 / NCIMB 9131 / NCTC 9757 / MK) protein is Phosphoglycerate kinase.